We begin with the raw amino-acid sequence, 90 residues long: Small ribosomal subunit protein uS15c (90 aa).

The protein belongs to the universal ribosomal protein uS15 family. As to quaternary structure, part of the 30S ribosomal subunit.

Its subcellular location is the plastid. The chain is Small ribosomal subunit protein uS15c (rps15) from Cuscuta reflexa (Southern Asian dodder).